Consider the following 300-residue polypeptide: Small ribosomal subunit protein uS2 (300 aa).

Positions Arg-228–Ala-300 are disordered. Over residues Ala-258–Ala-300 the composition is skewed to low complexity.

Belongs to the universal ribosomal protein uS2 family.

The polypeptide is Small ribosomal subunit protein uS2 (Rhodococcus jostii (strain RHA1)).